The sequence spans 266 residues: Signal peptidase I (266 aa).

Residues 1–20 are Cytoplasmic-facing; the sequence is MQTDNTKSNTNKTAKQEWGS. The chain crosses the membrane as a helical span at residues 21–41; the sequence is FAFVICIALLIRILIMEPFTV. Topologically, residues 42–266 are periplasmic; that stretch reads PTGSMKATIL…IFRNLYSTDE (225 aa). Residues Ser45 and Lys108 contribute to the active site.

It belongs to the peptidase S26 family.

Its subcellular location is the cell inner membrane. The enzyme catalyses Cleavage of hydrophobic, N-terminal signal or leader sequences from secreted and periplasmic proteins.. This is Signal peptidase I (lepB) from Rickettsia felis (strain ATCC VR-1525 / URRWXCal2) (Rickettsia azadi).